Here is a 351-residue protein sequence, read N- to C-terminus: Inactive RHOMBOID-like protein 8 (351 aa).

The next 7 membrane-spanning stretches (helical) occupy residues 48-68 (TWLV…TMGV), 130-150 (WLHS…FVGI), 160-180 (RIAV…VLFV), 183-203 (IPSI…LSAL), 216-236 (ALAI…LPFI), 239-259 (FANI…LFKP), and 294-314 (IICL…ACWG).

The protein belongs to the peptidase S54 family. In terms of tissue distribution, expressed in pollen mother cell.

The protein localises to the golgi apparatus membrane. Probable inactive rhomboid-type serine protease. In terms of biological role, probably essential for the meiosis stage-specific callose accumulation and pollen exine formation. The chain is Inactive RHOMBOID-like protein 8 from Arabidopsis thaliana (Mouse-ear cress).